The following is a 243-amino-acid chain: VQ motif-containing protein 33 (243 aa).

Residues 1 to 16 (MEVSTSSMSSKPEQMQ) show a composition bias toward polar residues. Positions 1–49 (MEVSTSSMSSKPEQMQNPPPMISSPRFQPQIISPHHHDQHQHLSNPYPT) are disordered. The VQ motif lies at 59-68 (FKQVVQMLTG). Disordered regions lie at residues 69 to 98 (SSTD…SIPP) and 138 to 162 (FTGG…SENI). 2 positions are modified to phosphoserine: serine 83 and serine 95. Residues 84–98 (PVNNNNKGSSFSIPP) are compositionally biased toward polar residues. Threonine 139 is subject to Phosphothreonine. A phosphoserine mark is found at serine 148, serine 152, serine 165, serine 167, and serine 178. Residues 149–162 (PRFSPRNSSSSENI) show a composition bias toward low complexity. Residues 180–243 (VTPLRSNDDP…FPVASPARNS (64 aa)) form a disordered region. A Phosphothreonine modification is found at threonine 181. The span at 191–201 (NKSSPLSLGNS) shows a compositional bias: polar residues. Phosphoserine is present on residues serine 218 and serine 221. At threonine 222 the chain carries Phosphothreonine. Serine 238 bears the Phosphoserine mark.

Phosphorylated on serine and threonine residues by MPK6.

The protein localises to the nucleus. Functionally, may modulate WRKY transcription factor activities. The sequence is that of VQ motif-containing protein 33 from Arabidopsis thaliana (Mouse-ear cress).